A 171-amino-acid polypeptide reads, in one-letter code: Shikimate kinase (171 aa).

Position 14–19 (14–19 (GAGKST)) interacts with ATP. Residue Ser18 coordinates Mg(2+). Residues Asp36, Arg60, and Gly82 each contribute to the substrate site. Residue Arg120 coordinates ATP. Position 139 (Arg139) interacts with substrate. Gln156 is a binding site for ATP.

The protein belongs to the shikimate kinase family. In terms of assembly, monomer. Requires Mg(2+) as cofactor.

It is found in the cytoplasm. It carries out the reaction shikimate + ATP = 3-phosphoshikimate + ADP + H(+). Its pathway is metabolic intermediate biosynthesis; chorismate biosynthesis; chorismate from D-erythrose 4-phosphate and phosphoenolpyruvate: step 5/7. Catalyzes the specific phosphorylation of the 3-hydroxyl group of shikimic acid using ATP as a cosubstrate. This is Shikimate kinase from Alteromonas mediterranea (strain DSM 17117 / CIP 110805 / LMG 28347 / Deep ecotype).